We begin with the raw amino-acid sequence, 211 residues long: LexA repressor (211 aa).

Positions 27-47 form a DNA-binding region, H-T-H motif; the sequence is QTEIARAFGFKGVRAVQHHLD. Active-site for autocatalytic cleavage activity residues include serine 131 and lysine 168.

It belongs to the peptidase S24 family. In terms of assembly, homodimer.

The catalysed reaction is Hydrolysis of Ala-|-Gly bond in repressor LexA.. Represses a number of genes involved in the response to DNA damage (SOS response), including recA and lexA. In the presence of single-stranded DNA, RecA interacts with LexA causing an autocatalytic cleavage which disrupts the DNA-binding part of LexA, leading to derepression of the SOS regulon and eventually DNA repair. This chain is LexA repressor, found in Xylella fastidiosa (strain M12).